The sequence spans 395 residues: Transcription termination/antitermination protein NusA (395 aa).

Residues 137-201 (NSVLMGQVIL…TKKGLLLELS (65 aa)) enclose the S1 motif domain. KH domains are found at residues 243–291 (SHNS…TLAL) and 331–378 (KVRL…NENE).

This sequence belongs to the NusA family. As to quaternary structure, monomer. Binds directly to the core enzyme of the DNA-dependent RNA polymerase and to nascent RNA.

The protein localises to the cytoplasm. Participates in both transcription termination and antitermination. The polypeptide is Transcription termination/antitermination protein NusA (Helicobacter pylori (strain J99 / ATCC 700824) (Campylobacter pylori J99)).